We begin with the raw amino-acid sequence, 80 residues long: Exodeoxyribonuclease 7 small subunit (80 aa).

It belongs to the XseB family. Heterooligomer composed of large and small subunits.

Its subcellular location is the cytoplasm. The catalysed reaction is Exonucleolytic cleavage in either 5'- to 3'- or 3'- to 5'-direction to yield nucleoside 5'-phosphates.. In terms of biological role, bidirectionally degrades single-stranded DNA into large acid-insoluble oligonucleotides, which are then degraded further into small acid-soluble oligonucleotides. This Cronobacter sakazakii (strain ATCC BAA-894) (Enterobacter sakazakii) protein is Exodeoxyribonuclease 7 small subunit.